The chain runs to 125 residues: Fluoride-specific ion channel FluC (125 aa).

A run of 4 helical transmembrane segments spans residues 6–26 (VLVM…GLGI), 35–55 (FLFG…GLFA), 66–86 (LLLL…ALSI), and 100–120 (AMGY…AGYL). Positions 76 and 79 each coordinate Na(+).

Belongs to the fluoride channel Fluc/FEX (TC 1.A.43) family.

The protein localises to the cell inner membrane. It carries out the reaction fluoride(in) = fluoride(out). Its activity is regulated as follows. Na(+) is not transported, but it plays an essential structural role and its presence is essential for fluoride channel function. In terms of biological role, fluoride-specific ion channel. Important for reducing fluoride concentration in the cell, thus reducing its toxicity. This chain is Fluoride-specific ion channel FluC, found in Gloeobacter violaceus (strain ATCC 29082 / PCC 7421).